A 294-amino-acid chain; its full sequence is 33 kDa chaperonin (294 aa).

Disulfide bonds link C239/C241 and C272/C275.

Belongs to the HSP33 family. Under oxidizing conditions two disulfide bonds are formed involving the reactive cysteines. Under reducing conditions zinc is bound to the reactive cysteines and the protein is inactive.

Its subcellular location is the cytoplasm. Functionally, redox regulated molecular chaperone. Protects both thermally unfolding and oxidatively damaged proteins from irreversible aggregation. Plays an important role in the bacterial defense system toward oxidative stress. This Listeria monocytogenes serovar 1/2a (strain ATCC BAA-679 / EGD-e) protein is 33 kDa chaperonin.